The primary structure comprises 345 residues: L-threonine 3-dehydrogenase (345 aa).

Cys39 contacts Zn(2+). Catalysis depends on charge relay system residues Thr41 and His44. Zn(2+) is bound by residues His64, Glu65, Cys94, Cys97, Cys100, and Cys108. NAD(+)-binding positions include Ile176, Asp196, Arg201, 263–265, and 287–288; these read LGI and VY.

This sequence belongs to the zinc-containing alcohol dehydrogenase family. As to quaternary structure, homotetramer. Requires Zn(2+) as cofactor.

It localises to the cytoplasm. It carries out the reaction L-threonine + NAD(+) = (2S)-2-amino-3-oxobutanoate + NADH + H(+). It functions in the pathway amino-acid degradation; L-threonine degradation via oxydo-reductase pathway; glycine from L-threonine: step 1/2. Its function is as follows. Catalyzes the NAD(+)-dependent oxidation of L-threonine to 2-amino-3-ketobutyrate. The protein is L-threonine 3-dehydrogenase of Anaeromyxobacter dehalogenans (strain 2CP-C).